The sequence spans 640 residues: uncharacterized protein (640 aa).

Transmembrane regions (helical) follow at residues 8–28 (GGVVTSGVGVAGVGVGLLGMF), 52–72 (LGGFFMALTGAVAAPVGCYLI), 90–110 (LFVAAMLLVPAAGSVTTFLLA), 136–156 (LWYAVMTQLGFIAILVGLVVL), 179–199 (VFMLTLVGFGSKAGLVPLHAW), 208–228 (PSPVSALMSAAMVNLGIYGIV), 241–261 (WWGLALLAVGGTSALYGVLQA), 277–297 (ENMGLITLALGAATLFADTGA), 298–318 (YGPASIAAAAAMLHMIAHAAF), 352–372 (TVFFGVAALGACGLPLGAGFV), 391–411 (IVALTTPLAVGVVALATGLSV), 446–466 (AIAAGACLVLAVAPLLVAPMV), 497–517 (IAPGVIAAAVLAAALAVAVLA), and 619–639 (GSVHRYLAYGALGVLIVLVVA).

The protein belongs to the complex I subunit 4 family.

The protein localises to the cell membrane. This is an uncharacterized protein from Mycobacterium tuberculosis (strain CDC 1551 / Oshkosh).